The primary structure comprises 270 residues: MEAVPEKKKKVATVPGTLKKKVPAGPKTLKKKVPAVPETLKKKRRNFAELKVKRLRKKFALKTLRKARRKLIYEKAKHYHKEYRQMYRTEIRMARMARKAGNFYVPAEPKLAFVIRIRGINGVSPKVRKVLQLLRLRQIFNGTFVKLNKASINMLRIVEPYIAWGYPNLKSVNELIYKRGYGKINKKRIALTDNSLIARSLGKFGIICMEDLIHEIYTVGKRFKEANNFLWPFKLSSPRGGMKKKTTHFVEGGDAGNREDQINRLIRRMN.

At Met-1 the chain carries N-acetylmethionine. Repeat copies occupy residues Lys-7–Leu-18, Lys-19–Leu-29, Lys-30–Leu-40, Lys-41–Val-52, Lys-53–Leu-64, and Arg-65–Ala-76. Positions Lys-7–Ala-76 are 6 X 12 AA tandem repeats. Position 39 is a phosphothreonine (Thr-39). Lys-146 is modified (N6-acetyllysine). Position 149 is an N6-succinyllysine (Lys-149). Tyr-161 bears the Phosphotyrosine mark.

It belongs to the universal ribosomal protein uL30 family. As to quaternary structure, component of the large ribosomal subunit. Homodimer. Interacts with DHX33.

The protein resides in the cytoplasm. Component of the large ribosomal subunit. The ribosome is a large ribonucleoprotein complex responsible for the synthesis of proteins in the cell. Binds to G-rich structures in 28S rRNA and in mRNAs. Plays a regulatory role in the translation apparatus; inhibits cell-free translation of mRNAs. This chain is Large ribosomal subunit protein uL30 (Rpl7), found in Mus musculus (Mouse).